The primary structure comprises 174 residues: Disulfide bond formation protein B (174 aa).

Residues 1–12 (MLNWIDTAPRRI) lie on the Cytoplasmic side of the membrane. A helical membrane pass occupies residues 13–29 (LALISAACVAMLAFGMY). Residues 30–47 (LQHVVGLEPCPMCIVQRY) are Periplasmic-facing. Cys-39 and Cys-42 are disulfide-bonded. The helical transmembrane segment at 48 to 64 (ALIGVAVFAGLASARGQ) threads the bilayer. At 65–69 (KGWWM) the chain is on the cytoplasmic side. The helical transmembrane segment at 70-87 (TWSVLALVAAGFGAFVAA) threads the bilayer. The Periplasmic segment spans residues 88 to 143 (RQSWLQWYPPEIATCGRDFYGMIENYPISRAIPMIFRGSGDCTAVDWTFLGGSIAN). Cys-102 and Cys-129 are oxidised to a cystine. Residues 144-162 (WSFVWFLLFAVLLLVLLVR) form a helical membrane-spanning segment. At 163–174 (GGRGAPDTLARA) the chain is on the cytoplasmic side.

It belongs to the DsbB family.

It localises to the cell inner membrane. Its function is as follows. Required for disulfide bond formation in some periplasmic proteins. Acts by oxidizing the DsbA protein. This chain is Disulfide bond formation protein B, found in Acidovorax sp. (strain JS42).